Here is a 138-residue protein sequence, read N- to C-terminus: Endoribonuclease YbeY (138 aa).

Zn(2+)-binding residues include H105, H109, and D115.

This sequence belongs to the endoribonuclease YbeY family. Zn(2+) is required as a cofactor.

It localises to the cytoplasm. Its function is as follows. Single strand-specific metallo-endoribonuclease involved in late-stage 70S ribosome quality control and in maturation of the 3' terminus of the 16S rRNA. The polypeptide is Endoribonuclease YbeY (Chlorobium phaeobacteroides (strain BS1)).